The following is a 245-amino-acid chain: Protein FAM133B (245 aa).

Disordered regions lie at residues 19–38 and 69–245; these read SRGPIQSSGPTIQDYLNRPR and WKKE…SDSP. The span at 69–80 shows a compositional bias: basic and acidic residues; it reads WKKELEKHREKL. Residue Ser82 is modified to Phosphoserine. The segment covering 89–102 has biased composition (basic residues); that stretch reads KKRQKKKKEKKKSG. The span at 103–119 shows a compositional bias: low complexity; it reads RYSSSSSSSSDSSSSSS. Over residues 128-140 the composition is skewed to basic residues; it reads QTKRRKKKKSHCH. Residues 165–176 are compositionally biased toward basic and acidic residues; it reads KDITEREKDTKG. Residues Ser190, Ser191, Ser193, and Ser195 each carry the phosphoserine modification. The segment covering 209-219 has biased composition (basic and acidic residues); that stretch reads SGEERERTTDK. The segment covering 220–237 has biased composition (basic residues); the sequence is AKKRRKHKKHSKKKKKKA.

It belongs to the FAM133 family.

The chain is Protein FAM133B (Fam133b) from Rattus norvegicus (Rat).